The chain runs to 140 residues: Organic hydroperoxide resistance protein-like (140 aa).

It belongs to the OsmC/Ohr family.

The polypeptide is Organic hydroperoxide resistance protein-like (Staphylococcus aureus (strain USA300)).